Here is a 1064-residue protein sequence, read N- to C-terminus: Isoleucine--tRNA ligase, cytoplasmic (1064 aa).

Residues 42–52 (PFATGRPHHGH) carry the 'HIGH' region motif. Positions 597–601 (KMSKR) match the 'KMSKS' region motif. Lysine 600 serves as a coordination point for ATP.

The protein belongs to the class-I aminoacyl-tRNA synthetase family.

It is found in the cytoplasm. It carries out the reaction tRNA(Ile) + L-isoleucine + ATP = L-isoleucyl-tRNA(Ile) + AMP + diphosphate. The chain is Isoleucine--tRNA ligase, cytoplasmic (irs1) from Schizosaccharomyces pombe (strain 972 / ATCC 24843) (Fission yeast).